Consider the following 330-residue polypeptide: Intraflagellar transport protein 46 homolog (330 aa).

Disordered regions lie at residues 1–21 (MDRP…ATPR) and 55–112 (SIKT…EGVY). The span at 7–16 (ETVDIPDSED) shows a compositional bias: acidic residues. Residues 68 to 79 (SSSEKLCDRGSS) are compositionally biased toward basic and acidic residues. A compositionally biased stretch (acidic residues) spans 80–101 (DDDDDDDNDDDEDEDDDDDDEN).

The protein belongs to the IFT46 family.

Its subcellular location is the cytoplasm. It is found in the cytoskeleton. The protein localises to the cilium basal body. The protein resides in the cell projection. It localises to the cilium. Functionally, forms part of a complex involved in intraflagellar transport (IFT), the bi-directional movement of particles required for the assembly, maintenance and functioning of primary cilia. This is Intraflagellar transport protein 46 homolog from Schistosoma japonicum (Blood fluke).